A 506-amino-acid chain; its full sequence is DEAD-box ATP-dependent RNA helicase CshA (506 aa).

Positions 2 to 30 (QNFKELGISDNTVQSLESMGFKEPTPIQK) match the Q motif motif. In terms of domain architecture, Helicase ATP-binding spans 33–203 (IPYALQGIDI…QQFMKSPKII (171 aa)). 46–53 (AQTGTGKT) provides a ligand contact to ATP. Residues 150–153 (DEAD) carry the DEAD box motif. Residues 214–375 (QIEEFYTIVK…LRPPHRKEVL (162 aa)) enclose the Helicase C-terminal domain. A disordered region spans residues 436-506 (EKPLSRKGRN…KGRTFADHQK (71 aa)). Residues 468-480 (KRSKGYSSKKKST) are compositionally biased toward basic residues.

It belongs to the DEAD box helicase family. CshA subfamily. Oligomerizes, may be a member of the RNA degradosome.

Its subcellular location is the cytoplasm. The catalysed reaction is ATP + H2O = ADP + phosphate + H(+). Its function is as follows. DEAD-box RNA helicase possibly involved in RNA degradation. Unwinds dsRNA in both 5'- and 3'-directions, has RNA-dependent ATPase activity. The protein is DEAD-box ATP-dependent RNA helicase CshA of Staphylococcus aureus (strain MRSA252).